A 253-amino-acid chain; its full sequence is Ubiquinone/menaquinone biosynthesis C-methyltransferase UbiE (253 aa).

Residues Thr76, Asp97, 125–126, and Ser142 contribute to the S-adenosyl-L-methionine site; that span reads NA.

The protein belongs to the class I-like SAM-binding methyltransferase superfamily. MenG/UbiE family.

The catalysed reaction is a 2-demethylmenaquinol + S-adenosyl-L-methionine = a menaquinol + S-adenosyl-L-homocysteine + H(+). It carries out the reaction a 2-methoxy-6-(all-trans-polyprenyl)benzene-1,4-diol + S-adenosyl-L-methionine = a 5-methoxy-2-methyl-3-(all-trans-polyprenyl)benzene-1,4-diol + S-adenosyl-L-homocysteine + H(+). The protein operates within quinol/quinone metabolism; menaquinone biosynthesis; menaquinol from 1,4-dihydroxy-2-naphthoate: step 2/2. It participates in cofactor biosynthesis; ubiquinone biosynthesis. Functionally, methyltransferase required for the conversion of demethylmenaquinol (DMKH2) to menaquinol (MKH2) and the conversion of 2-polyprenyl-6-methoxy-1,4-benzoquinol (DDMQH2) to 2-polyprenyl-3-methyl-6-methoxy-1,4-benzoquinol (DMQH2). The sequence is that of Ubiquinone/menaquinone biosynthesis C-methyltransferase UbiE from Xylella fastidiosa (strain 9a5c).